The primary structure comprises 443 residues: ATP-dependent protease ATPase subunit HslU (443 aa).

Residues Ile18, 60–65 (GVGKTE), Asp256, Glu321, and Arg393 contribute to the ATP site.

This sequence belongs to the ClpX chaperone family. HslU subfamily. As to quaternary structure, a double ring-shaped homohexamer of HslV is capped on each side by a ring-shaped HslU homohexamer. The assembly of the HslU/HslV complex is dependent on binding of ATP.

The protein resides in the cytoplasm. ATPase subunit of a proteasome-like degradation complex; this subunit has chaperone activity. The binding of ATP and its subsequent hydrolysis by HslU are essential for unfolding of protein substrates subsequently hydrolyzed by HslV. HslU recognizes the N-terminal part of its protein substrates and unfolds these before they are guided to HslV for hydrolysis. The polypeptide is ATP-dependent protease ATPase subunit HslU (Escherichia fergusonii (strain ATCC 35469 / DSM 13698 / CCUG 18766 / IAM 14443 / JCM 21226 / LMG 7866 / NBRC 102419 / NCTC 12128 / CDC 0568-73)).